The following is a 265-amino-acid chain: Adenosine 5'-phosphosulfate reductase (265 aa).

[4Fe-4S] cluster contacts are provided by Cys-135, Cys-136, Cys-218, and Cys-221. Cys-246 acts as the Nucleophile; cysteine thiosulfonate intermediate in catalysis.

It belongs to the PAPS reductase family. CysH subfamily. [4Fe-4S] cluster is required as a cofactor.

The protein localises to the cytoplasm. The catalysed reaction is [thioredoxin]-disulfide + sulfite + AMP + 2 H(+) = adenosine 5'-phosphosulfate + [thioredoxin]-dithiol. It functions in the pathway sulfur metabolism; hydrogen sulfide biosynthesis; sulfite from sulfate. In terms of biological role, catalyzes the formation of sulfite from adenosine 5'-phosphosulfate (APS) using thioredoxin as an electron donor. The sequence is that of Adenosine 5'-phosphosulfate reductase from Rhizobium meliloti (strain 1021) (Ensifer meliloti).